The primary structure comprises 45 residues: Protein PsbN (45 aa).

Residues 12–30 (FLSRSLVSFTGYALYTAFG) traverse the membrane as a helical segment.

This sequence belongs to the PsbN family.

It is found in the plastid. The protein localises to the chloroplast thylakoid membrane. May play a role in photosystem I and II biogenesis. This Adiantum capillus-veneris (Maidenhair fern) protein is Protein PsbN.